A 251-amino-acid chain; its full sequence is Adenosylcobinamide-GDP ribazoletransferase (251 aa).

7 consecutive transmembrane segments (helical) span residues 36 to 56 (LYPF…FVLS), 60 to 80 (VPIM…TGFL), 110 to 130 (VGAF…AGMF), 141 to 161 (VLIF…VSQE), 181 to 201 (EIIL…TLGI), 202 to 222 (NYLI…LKVK), and 231 to 251 (DVAG…LGII).

The protein belongs to the CobS family. Mg(2+) is required as a cofactor.

The protein resides in the cell membrane. It carries out the reaction alpha-ribazole + adenosylcob(III)inamide-GDP = adenosylcob(III)alamin + GMP + H(+). The enzyme catalyses alpha-ribazole 5'-phosphate + adenosylcob(III)inamide-GDP = adenosylcob(III)alamin 5'-phosphate + GMP + H(+). Its pathway is cofactor biosynthesis; adenosylcobalamin biosynthesis; adenosylcobalamin from cob(II)yrinate a,c-diamide: step 7/7. In terms of biological role, joins adenosylcobinamide-GDP and alpha-ribazole to generate adenosylcobalamin (Ado-cobalamin). Also synthesizes adenosylcobalamin 5'-phosphate from adenosylcobinamide-GDP and alpha-ribazole 5'-phosphate. The protein is Adenosylcobinamide-GDP ribazoletransferase of Clostridium perfringens (strain 13 / Type A).